Reading from the N-terminus, the 1481-residue chain is Chromosome partition protein MukB (1481 aa).

34–41 is a binding site for ATP; the sequence is GGNGAGKS. Coiled-coil stretches lie at residues 338 to 480, 509 to 604, 780 to 805, 835 to 1116, and 1210 to 1265; these read SLVQ…QAYQ, QHLA…APVW, RAAR…ATLS, EAEI…AKAG, and EAIE…LQAV. The flexible hinge stretch occupies residues 666-783; the sequence is PSGAEDSRMI…EVPLFGRAAR (118 aa).

Belongs to the SMC family. MukB subfamily. In terms of assembly, homodimerization via its hinge domain. Binds to DNA via its C-terminal region. Interacts, and probably forms a ternary complex, with MukE and MukF via its C-terminal region. The complex formation is stimulated by calcium or magnesium. Interacts with tubulin-related protein FtsZ.

The protein localises to the cytoplasm. It localises to the nucleoid. Functionally, plays a central role in chromosome condensation, segregation and cell cycle progression. Functions as a homodimer, which is essential for chromosome partition. Involved in negative DNA supercoiling in vivo, and by this means organize and compact chromosomes. May achieve or facilitate chromosome segregation by condensation DNA from both sides of a centrally located replisome during cell division. The protein is Chromosome partition protein MukB of Yersinia enterocolitica serotype O:8 / biotype 1B (strain NCTC 13174 / 8081).